The following is a 599-amino-acid chain: Subtilisin-like protease 1 (599 aa).

The first 20 residues, 1–20 (MRTVFIYACIISLVLRTIPA), serve as a signal peptide directing secretion. A propeptide spans 21-195 (HNDLMSKEKE…VESDELVGAD (175 aa)) (inhibition peptide). N57 carries an N-linked (GlcNAc...) asparagine glycan. Residues 74–101 (EDAPKEELNKIEMEKKKAEEEAKNSKKK) adopt a coiled-coil conformation. Ca(2+)-binding residues include N123, T126, P128, and G183. N227 carries an N-linked (GlcNAc...) asparagine glycan. D251 is a binding site for Ca(2+). A Peptidase S8 domain is found at 257-574 (QWGLDLARLD…GGYIDILNAV (318 aa)). 2 cysteine pairs are disulfide-bonded: C283–C393 and C372–C389. D286 functions as the Charge relay system in the catalytic mechanism. The Ca(2+) site is built by D295, E306, D314, D315, D316, N318, I320, D322, and D323. N-linked (GlcNAc...) asparagine glycosylation occurs at N331. H342 functions as the Charge relay system in the catalytic mechanism. I353 lines the Ca(2+) pocket. An N-linked (GlcNAc...) asparagine glycan is attached at N355. Ca(2+) contacts are provided by N356, I358, and V360. N-linked (GlcNAc...) asparagine glycosylation is found at N402 and N434. Residues C435 and C448 are joined by a disulfide bond. Residue S519 is the Charge relay system of the active site.

Belongs to the peptidase S8 family. Post-translationally, the N-terminal prodomain is cleaved.

It localises to the secreted. It is found in the parasitophorous vacuole lumen. The protein localises to the cytoplasmic vesicle. The protein resides in the secretory vesicle. The catalysed reaction is Hydrolysis of proteins with broad specificity for peptide bonds, and a preference for a large uncharged residue in P1. Hydrolyzes peptide amides.. Mediates the proteolytic maturation of serine protease SERA3. Mediates the proteolytic maturation of MSP1, and thereby may prime the parasite cell surface for invasion of fresh erythrocytes. Required for completion of the parasite pre-erythrocytic stages. Required for hepatic schizont development and merozoite formation. Required for the egress of the hepatic merozoites from the parasitophorous vacuole. Required for parasite infectivity during blood stages. Required for male gamete egress. The sequence is that of Subtilisin-like protease 1 from Plasmodium berghei (strain Anka).